We begin with the raw amino-acid sequence, 669 residues long: Zinc finger MYM-type protein 5 (669 aa).

Glycyl lysine isopeptide (Lys-Gly) (interchain with G-Cter in SUMO2) cross-links involve residues Lys-88, Lys-91, Lys-134, Lys-149, Lys-166, and Lys-225. 4 consecutive MYM-type zinc fingers follow at residues His-265–Asn-299, Gln-311–Val-351, His-358–Gly-393, and Lys-404–Asn-431. Residues Lys-443, Lys-455, Lys-462, and Lys-552 each participate in a glycyl lysine isopeptide (Lys-Gly) (interchain with G-Cter in SUMO2) cross-link.

As to quaternary structure, interacts (via N-terminal 120 amino acid region) with ETV5 (via C-terminal).

Its subcellular location is the nucleus. Its function is as follows. Functions as a transcriptional regulator. This chain is Zinc finger MYM-type protein 5 (ZMYM5), found in Homo sapiens (Human).